The sequence spans 530 residues: Alpha-(1,3)-fucosyltransferase 4 (530 aa).

2 disordered regions span residues 1 to 48 (MRRL…RAVP) and 66 to 113 (HLGG…TPAD). Topologically, residues 1 to 147 (MRRLWGAARK…GGRRRWRRGR (147 aa)) are cytoplasmic. Over residues 88-106 (ASGERQRRLEPQLQHESRC) the composition is skewed to basic and acidic residues. Residues 148–172 (GLPWTVCVLAAAGLTCTALITYACW) form a helical; Signal-anchor for type II membrane protein membrane-spanning segment. Residues 173–530 (GQLPPLPWAS…IRNLASWFER (358 aa)) lie on the Lumenal side of the membrane. N-linked (GlcNAc...) asparagine glycosylation is found at Asn216 and Asn315.

This sequence belongs to the glycosyltransferase 10 family.

Its subcellular location is the golgi apparatus. The protein localises to the golgi stack membrane. The catalysed reaction is a beta-D-galactosyl-(1-&gt;4)-N-acetyl-beta-D-glucosaminyl derivative + GDP-beta-L-fucose = a beta-D-galactosyl-(1-&gt;4)-[alpha-L-fucosyl-(1-&gt;3)]-N-acetyl-beta-D-glucosaminyl derivative + GDP + H(+). The enzyme catalyses an N-acetyl-alpha-neuraminyl-(2-&gt;3)-beta-D-galactosyl-(1-&gt;4)-N-acetyl-beta-D-glucosaminyl derivative + GDP-beta-L-fucose = an alpha-Neu5Ac-(2-&gt;3)-beta-D-Gal-(1-&gt;4)-[alpha-L-Fuc-(1-&gt;3)]-beta-D-GlcNAc derivative + GDP + H(+). It carries out the reaction an alpha-Neu5Ac-(2-&gt;3)-beta-D-Gal-(1-&gt;4)-beta-D-GlcNAc-(1-&gt;3)-beta-D-Gal-(1-&gt;4)-beta-D-GlcNAc derivative + GDP-beta-L-fucose = an alpha-Neu5Ac-(2-&gt;3)-beta-D-Gal-(1-&gt;4)-beta-D-GlcNAc-(1-&gt;3)-beta-D-Gal-(1-&gt;4)-[alpha-L-Fuc-(1-&gt;3)]-beta-D-GlcNAc derivative + GDP + H(+). It catalyses the reaction an alpha-Neu5Ac-(2-&gt;3)-beta-D-Gal-(1-&gt;4)-beta-D-GlcNAc6S derivative + GDP-beta-L-fucose = an alpha-Neu5Ac-(2-&gt;3)-beta-D-Gal-(1-&gt;4)-[alpha-L-Fuc-(1-&gt;3)]-beta-D-GlcNAc6S derivative + GDP + H(+). The protein operates within protein modification; protein glycosylation. Catalyzes alpha(1-&gt;3) linkage of fucosyl moiety transferred from GDP-beta-L-fucose to N-acetyl glucosamine (GlcNAc) within type 2 lactosamine (LacNAc, Gal-beta(1-&gt;4)GlcNAc) glycan attached to N- or O-linked glycoproteins. Robustly fucosylates nonsialylated distal LacNAc unit of the polylactosamine chain to form Lewis X antigen (CD15), a glycan determinant known to mediate important cellular functions in development and immunity. Fucosylates with lower efficiency sialylated LacNAc acceptors to form sialyl Lewis X and 6-sulfo sialyl Lewis X determinants that serve as recognition epitopes for C-type lectins. Together with FUT7 contributes to SELE, SELL and SELP selectin ligand biosynthesis and selectin-dependent lymphocyte homing, leukocyte migration and blood leukocyte homeostasis. In a cell type specific manner, may also fucosylate the internal LacNAc unit of the polylactosamine chain to form VIM-2 antigen that serves as recognition epitope for SELE. The sequence is that of Alpha-(1,3)-fucosyltransferase 4 (FUT4) from Pan troglodytes (Chimpanzee).